The sequence spans 201 residues: Female-specific protein transformer (201 aa).

The interval 1 to 117 (MDADSSSRSP…RSRSRSRTPR (117 aa)) is disordered. The span at 9–37 (SPRDTRTCARPKEKVPYFADEGRERDRVR) shows a compositional bias: basic and acidic residues. 2 stretches are compositionally biased toward basic residues: residues 38-62 (NLRHRKTSITRPTTSHRGRPMRARS) and 99-115 (KQRRRRSRSRSRSRSRT).

The protein localises to the nucleus speckle. Functionally, member of the regulatory pathway controlling female somatic sexual differentiation, regulated by Sxl. Activates dsx female-specific splicing by promoting the formation of a splicing enhancer complex which consists of tra, tra2 and sr proteins. In Drosophila hydei (Fruit fly), this protein is Female-specific protein transformer (tra).